A 252-amino-acid polypeptide reads, in one-letter code: Cell division protein ZapD (252 aa).

Belongs to the ZapD family. Interacts with FtsZ.

It localises to the cytoplasm. Cell division factor that enhances FtsZ-ring assembly. Directly interacts with FtsZ and promotes bundling of FtsZ protofilaments, with a reduction in FtsZ GTPase activity. In Ralstonia pickettii (strain 12J), this protein is Cell division protein ZapD.